Reading from the N-terminus, the 331-residue chain is MESMLTLAHLQQRRSRRWLFGLTLLLLVTLLISLCAGEQWIPPGEWLSAKGQLFIWQIRLPRTLAVLLVGAALALSGAIMQALFENPLAEPGLLGISNGAGVGLIAAVLLGKGVLPGWALGLCAIFGALLITFILLRFARRHLSTSRLLLAGVALGIICSALMTWAVYFSTSFDLRQLMYWMMGGFGGVDWQQLWLMIALLPVLCWVCLQSQPLNLLALGEVSARQLGLPLWLWRKLLVVATGWMVGVSVALAGAIGFIGLVIPHILRLCGLSDHRVLLPACMMAGASALLGADIIARLALSAAELPIGVVTATLGAPVFIWLLLRSRGRG.

The next 9 membrane-spanning stretches (helical) occupy residues 18–38 (WLFG…CAGE), 64–84 (LAVL…QALF), 91–111 (PGLL…VLLG), 114–134 (VLPG…ITFI), 149–169 (LLAG…AVYF), 194–214 (LWLM…SQPL), 243–263 (GWMV…GLVI), 277–297 (VLLP…DIIA), and 305–325 (ELPI…WLLL).

Belongs to the binding-protein-dependent transport system permease family. FecCD subfamily. In terms of assembly, the complex is composed of two ATP-binding proteins (BtuD), two transmembrane proteins (BtuC) and a solute-binding protein (BtuF).

The protein localises to the cell inner membrane. Functionally, part of the ABC transporter complex BtuCDF involved in vitamin B12 import. Involved in the translocation of the substrate across the membrane. In Klebsiella pneumoniae subsp. pneumoniae (strain ATCC 700721 / MGH 78578), this protein is Vitamin B12 import system permease protein BtuC.